Reading from the N-terminus, the 374-residue chain is Protein RecA (374 aa).

ATP is bound at residue 77–84 (GPESSGKT). The interval 355 to 374 (AAKTAAADKSAPAKASEAAA) is disordered.

Belongs to the RecA family.

Its subcellular location is the cytoplasm. Can catalyze the hydrolysis of ATP in the presence of single-stranded DNA, the ATP-dependent uptake of single-stranded DNA by duplex DNA, and the ATP-dependent hybridization of homologous single-stranded DNAs. It interacts with LexA causing its activation and leading to its autocatalytic cleavage. This Synechococcus sp. (strain CC9605) protein is Protein RecA.